A 1017-amino-acid chain; its full sequence is Probable isoleucine--tRNA ligase, cytoplasmic (1017 aa).

Residues 45–55 (PFATGLPHYGH) carry the 'HIGH' region motif. Positions 609–613 (KMSKR) match the 'KMSKS' region motif. Lysine 612 is a binding site for ATP.

Belongs to the class-I aminoacyl-tRNA synthetase family.

The protein resides in the cytoplasm. The enzyme catalyses tRNA(Ile) + L-isoleucine + ATP = L-isoleucyl-tRNA(Ile) + AMP + diphosphate. This is Probable isoleucine--tRNA ligase, cytoplasmic from Encephalitozoon cuniculi (strain GB-M1) (Microsporidian parasite).